The primary structure comprises 238 residues: Dof zinc finger protein MNB1A (238 aa).

Over residues 1 to 13 the composition is skewed to low complexity; the sequence is MQEASSAAAAGAE. Residues 1 to 48 form a disordered region; the sequence is MQEASSAAAAGAEPGRRAAQHQFAGVDLRRPKGYAAPAPAPAVGEGDP. The segment at 47-101 adopts a Dof-type zinc-finger fold; that stretch reads DPCPRCASRDTKFCYYNNYNTSQPRHFCKGCRRYWTKGGTLRNVPVGGGTRKKPS. Positions 49, 52, 74, and 77 each coordinate Zn(2+). Residues 85–155 are disordered; the sequence is GTLRNVPVGG…TATTTTTTSE (71 aa). Basic residues predominate over residues 119-130; sequence PKKKPASKKRRV. Low complexity predominate over residues 138-155; the sequence is ATAADPGKTATTTTTTSE.

In terms of tissue distribution, expressed in all tissues examined.

The protein resides in the nucleus. Its function is as follows. Transcription factor that binds specifically to a 5'-AA[AG]G-3' consensus core sequence at the MNF1-binding site. This Zea mays (Maize) protein is Dof zinc finger protein MNB1A (MNB1A).